A 163-amino-acid polypeptide reads, in one-letter code: Arginine repressor (163 aa).

It belongs to the ArgR family.

The protein localises to the cytoplasm. Its pathway is amino-acid biosynthesis; L-arginine biosynthesis [regulation]. Regulates arginine biosynthesis genes. This chain is Arginine repressor, found in Anaeromyxobacter dehalogenans (strain 2CP-C).